The following is a 53-amino-acid chain: Photosystem II reaction center protein K (53 aa).

The propeptide occupies 1-16 (MLKFYLENVFHLIFFA). Residues 28 to 48 (IVNVMPIIPLFFFLLAFVWQA) traverse the membrane as a helical segment.

This sequence belongs to the PsbK family. In terms of assembly, PSII is composed of 1 copy each of membrane proteins PsbA, PsbB, PsbC, PsbD, PsbE, PsbF, PsbH, PsbI, PsbJ, PsbK, PsbL, PsbM, PsbT, PsbX, PsbY, PsbZ, Psb30/Ycf12, at least 3 peripheral proteins of the oxygen-evolving complex and a large number of cofactors. It forms dimeric complexes.

The protein resides in the plastid. Its subcellular location is the chloroplast thylakoid membrane. In terms of biological role, one of the components of the core complex of photosystem II (PSII). PSII is a light-driven water:plastoquinone oxidoreductase that uses light energy to abstract electrons from H(2)O, generating O(2) and a proton gradient subsequently used for ATP formation. It consists of a core antenna complex that captures photons, and an electron transfer chain that converts photonic excitation into a charge separation. This chain is Photosystem II reaction center protein K, found in Huperzia lucidula (Shining clubmoss).